We begin with the raw amino-acid sequence, 149 residues long: MAZZLTDEQIAEFKEAFSLFDKDGDGCITTKELGTVMRSLGQNPTEAELQDMINEVDADGNGTIDFPEFLNLMARKMKDTDSEEELKEAFRVFDKDQNGFISAAELRHVMTNLGEKLTDEEVDEMIREADVDGDGQINYEEFVKVMMAK.

The residue at position 2 (Ala2) is an N-acetylalanine. EF-hand domains lie at Glu8–Asn43, Pro44–Asp79, Asp81–Lys116, and Leu117–Lys149. Ca(2+) contacts are provided by Asp21, Asp23, Asp25, Cys27, Glu32, Asp57, Asp59, Asn61, Thr63, Glu68, Asp94, Asp96, Asn98, and Glu105. An N6,N6,N6-trimethyllysine modification is found at Lys116. Asp130, Asp132, Asp134, Gln136, and Glu141 together coordinate Ca(2+).

It belongs to the calmodulin family. In terms of processing, the N-terminus is blocked.

Functionally, calmodulin mediates the control of a large number of enzymes, ion channels and other proteins by Ca(2+). Among the enzymes to be stimulated by the calmodulin-Ca(2+) complex are a number of protein kinases and phosphatases. The protein is Calmodulin of Spinacia oleracea (Spinach).